We begin with the raw amino-acid sequence, 238 residues long: Ribonuclease PH (238 aa).

Residues Arg-86 and 124 to 126 (GTR) each bind phosphate.

It belongs to the RNase PH family. In terms of assembly, homohexameric ring arranged as a trimer of dimers.

The enzyme catalyses tRNA(n+1) + phosphate = tRNA(n) + a ribonucleoside 5'-diphosphate. Functionally, phosphorolytic 3'-5' exoribonuclease that plays an important role in tRNA 3'-end maturation. Removes nucleotide residues following the 3'-CCA terminus of tRNAs; can also add nucleotides to the ends of RNA molecules by using nucleoside diphosphates as substrates, but this may not be physiologically important. Probably plays a role in initiation of 16S rRNA degradation (leading to ribosome degradation) during starvation. The chain is Ribonuclease PH from Psychrobacter sp. (strain PRwf-1).